Reading from the N-terminus, the 943-residue chain is Isoleucine--tRNA ligase (943 aa).

The 'HIGH' region motif lies at 59 to 69; the sequence is PYANGQIHLGH. An L-isoleucyl-5'-AMP-binding site is contributed by E577. Positions 618–622 match the 'KMSKS' region motif; that stretch reads KMSKS. K621 contacts ATP. 4 residues coordinate Zn(2+): C906, C909, C926, and C929.

It belongs to the class-I aminoacyl-tRNA synthetase family. IleS type 1 subfamily. In terms of assembly, monomer. Zn(2+) serves as cofactor.

It is found in the cytoplasm. The enzyme catalyses tRNA(Ile) + L-isoleucine + ATP = L-isoleucyl-tRNA(Ile) + AMP + diphosphate. Its function is as follows. Catalyzes the attachment of isoleucine to tRNA(Ile). As IleRS can inadvertently accommodate and process structurally similar amino acids such as valine, to avoid such errors it has two additional distinct tRNA(Ile)-dependent editing activities. One activity is designated as 'pretransfer' editing and involves the hydrolysis of activated Val-AMP. The other activity is designated 'posttransfer' editing and involves deacylation of mischarged Val-tRNA(Ile). The protein is Isoleucine--tRNA ligase of Xylella fastidiosa (strain M23).